The chain runs to 448 residues: Probable sodium-coupled neutral amino acid transporter 6 (448 aa).

2 stretches are compositionally biased toward polar residues: residues 1 to 12 (MQASDSSINTLD) and 26 to 36 (LLANSPQRRSS). A disordered region spans residues 1–36 (MQASDSSINTLDGHQVSAGRDESTPLLANSPQRRSS). 5 helical membrane-spanning segments follow: residues 40–60 (SFGFAVFNLMNAIMGSGILGL), 69–89 (ILGFSALLLIVALLAAYSIHL), 117–137 (LVACTILIQNVGAMSSYLFII), 164–184 (LLIITSVCIVLPLALLPKIGF), and 185–205 (LGYTSSLSFFFMVYFAVVIVI). Cysteines 212 and 232 form a disulfide. Asn-218 and Asn-228 each carry an N-linked (GlcNAc...) asparagine glycan. Helical transmembrane passes span 244-264 (AFALPTMAFSFLCHTSVLPIY), 281-301 (VGIALSFLIYYISALFGYLTF), 321-341 (VLIITVRLCILLAVLLTVPLI), 365-385 (ILVTLVLNIIIVLLAIYVPDM), 388-408 (VFGVVGSTTSTCLLFVFPGLF), and 425-445 (ACGLLVLGICIGACSLTLIIM).

Belongs to the amino acid/polyamine transporter 2 family.

Its subcellular location is the cell membrane. Functionally, probable sodium-dependent amino acid/proton antiporter, could be a neuronal transporter for glutamate. In Xenopus tropicalis (Western clawed frog), this protein is Probable sodium-coupled neutral amino acid transporter 6 (slc38a6).